We begin with the raw amino-acid sequence, 299 residues long: Acetaldehyde dehydrogenase (299 aa).

The Acyl-thioester intermediate role is filled by Cys-126. NAD(+)-binding positions include 157–165 (SAGPGTRQN) and Asn-267.

It belongs to the acetaldehyde dehydrogenase family.

It carries out the reaction acetaldehyde + NAD(+) + CoA = acetyl-CoA + NADH + H(+). The sequence is that of Acetaldehyde dehydrogenase (mhpF) from Carboxydothermus hydrogenoformans (strain ATCC BAA-161 / DSM 6008 / Z-2901).